A 313-amino-acid chain; its full sequence is Esterase mpl1 (313 aa).

Active-site charge relay system residues include Ser-174, Asp-259, and His-287.

Belongs to the LovG family.

The protein operates within mycotoxin biosynthesis. Its function is as follows. Esterase; part of the gene cluster that mediates the biosynthesis of the mycotoxin citrinin, a hepato-nephrotoxic compound to humans due to inhibition of respiration complex III. The pathway begins with the synthesis of a keto-aldehyde intermediate by the citrinin PKS (pksCT) from successive condensations of 4 malonyl-CoA units, presumably with a simple acetyl-CoA starter unit. Release of the keto-aldehyde intermediate is consistent with the presence of the C-terminal reductive release domain. Mp11 collaborates with pksCT by catalyzing the hydrolysis of ACP-bound acyl intermediates to free the ACP from stalled intermediates. Mpl2 then catalyzes the oxidation of the C-12 methyl of the ketone intermediate to an alcohol intermediate which is further oxidized by the oxidoreductase mpl7 to produce a bisaldehyde intermediate. The fourth catalytic step is catalyzed by the mpl4 aldehyde dehydrogenase. The final transformation is the reduction of C-3 by mpl6 to provide the chemically stable citrinin nucleus. In Monascus purpureus (Red mold), this protein is Esterase mpl1.